A 211-amino-acid polypeptide reads, in one-letter code: Probable nicotinate-nucleotide adenylyltransferase (211 aa).

Belongs to the NadD family.

It carries out the reaction nicotinate beta-D-ribonucleotide + ATP + H(+) = deamido-NAD(+) + diphosphate. Its pathway is cofactor biosynthesis; NAD(+) biosynthesis; deamido-NAD(+) from nicotinate D-ribonucleotide: step 1/1. Functionally, catalyzes the reversible adenylation of nicotinate mononucleotide (NaMN) to nicotinic acid adenine dinucleotide (NaAD). In Lactiplantibacillus plantarum (strain ATCC BAA-793 / NCIMB 8826 / WCFS1) (Lactobacillus plantarum), this protein is Probable nicotinate-nucleotide adenylyltransferase.